The following is a 559-amino-acid chain: Glycerol kinase (559 aa).

Thr-20 lines the ADP pocket. Residues Thr-20, Ser-21, and Ser-22 each contribute to the ATP site. Thr-20 contacts sn-glycerol 3-phosphate. Arg-24 provides a ligand contact to ADP. Residues Arg-94, Glu-95, and Tyr-148 each coordinate sn-glycerol 3-phosphate. Arg-94, Glu-95, and Tyr-148 together coordinate glycerol. Position 252 (Gly-252) interacts with beta-D-fructose 1,6-bisphosphate. Asp-265 provides a ligand contact to sn-glycerol 3-phosphate. Residues Asp-265 and Gln-266 each coordinate glycerol. ADP contacts are provided by Thr-287, Gly-332, Gly-433, and Asn-437. Residues Thr-287, Gly-332, and Gly-433 each coordinate ATP. Residue Glu-501 participates in Zn(2+) binding. The chain crosses the membrane as a helical span at residues 532–552 (IFCSLPLGFFIVSSMVMLIGA).

The protein belongs to the FGGY kinase family.

Its subcellular location is the mitochondrion outer membrane. It localises to the nucleus. The protein resides in the cytoplasm. The protein localises to the cytosol. It catalyses the reaction glycerol + ATP = sn-glycerol 3-phosphate + ADP + H(+). It functions in the pathway polyol metabolism; glycerol degradation via glycerol kinase pathway; sn-glycerol 3-phosphate from glycerol: step 1/1. In terms of biological role, kinase that plays a key role in glycerol metabolism, catalyzing its phosphorylation to produce sn-glycerol 3-phosphate. Sn-glycerol 3-phosphate is a crucial intermediate in various metabolic pathways, such as the synthesis of glycerolipids and triglycerides, glycogenesis, glycolysis and gluconeogenesis. This is Glycerol kinase from Rattus norvegicus (Rat).